Here is a 379-residue protein sequence, read N- to C-terminus: Cytochrome b (379 aa).

4 helical membrane passes run 33–53, 77–98, 113–133, and 178–198; these read FGSL…FLAM, WLIR…YLHI, WNIG…GYVL, and FFAF…LHLL. Residues H83 and H97 each coordinate heme b. Heme b is bound by residues H182 and H196. Position 201 (H201) interacts with a ubiquinone. The next 4 helical transmembrane spans lie at 226–246, 288–308, 320–340, and 347–367; these read YKDL…ALFY, LGGV…PILH, ASQL…WIGG, and YIII…VLNP.

Belongs to the cytochrome b family. The cytochrome bc1 complex contains 3 respiratory subunits (MT-CYB, CYC1 and UQCRFS1), 2 core proteins (UQCRC1 and UQCRC2) and probably 6 low-molecular weight proteins. Heme b is required as a cofactor.

The protein resides in the mitochondrion inner membrane. Functionally, component of the ubiquinol-cytochrome c reductase complex (complex III or cytochrome b-c1 complex) that is part of the mitochondrial respiratory chain. The b-c1 complex mediates electron transfer from ubiquinol to cytochrome c. Contributes to the generation of a proton gradient across the mitochondrial membrane that is then used for ATP synthesis. The polypeptide is Cytochrome b (mt-cyb) (Anguilla rostrata (American eel)).